Here is a 269-residue protein sequence, read N- to C-terminus: Putative pyruvate, phosphate dikinase regulatory protein (269 aa).

ADP is bound at residue 147–154; the sequence is GLSRTSKT.

It belongs to the pyruvate, phosphate/water dikinase regulatory protein family. PDRP subfamily.

It catalyses the reaction N(tele)-phospho-L-histidyl/L-threonyl-[pyruvate, phosphate dikinase] + ADP = N(tele)-phospho-L-histidyl/O-phospho-L-threonyl-[pyruvate, phosphate dikinase] + AMP + H(+). The catalysed reaction is N(tele)-phospho-L-histidyl/O-phospho-L-threonyl-[pyruvate, phosphate dikinase] + phosphate + H(+) = N(tele)-phospho-L-histidyl/L-threonyl-[pyruvate, phosphate dikinase] + diphosphate. Its function is as follows. Bifunctional serine/threonine kinase and phosphorylase involved in the regulation of the pyruvate, phosphate dikinase (PPDK) by catalyzing its phosphorylation/dephosphorylation. In Clostridium botulinum (strain ATCC 19397 / Type A), this protein is Putative pyruvate, phosphate dikinase regulatory protein.